The sequence spans 778 residues: Glutathione biosynthesis bifunctional protein GshAB (778 aa).

Residues 1–354 (MVNLDKGLLK…EEFFKNHDMV (354 aa)) form a glutamate--cysteine ligase region. One can recognise an ATP-grasp domain in the interval 521 to 777 (KDILRENNIR…AGEKILDLLF (257 aa)). 548–606 (RLFKDEKIVIKPKSTNFGLGISIFPGEYSREDYDKAVEIAFREDSSILIEEFMTGKEYR) is a binding site for ATP. Mg(2+)-binding residues include D728, E747, and N749. Mn(2+) is bound by residues D728, E747, and N749.

It in the N-terminal section; belongs to the glutamate--cysteine ligase type 1 family. Type 2 subfamily. As to quaternary structure, monomer. Mg(2+) is required as a cofactor. Requires Mn(2+) as cofactor.

It carries out the reaction L-cysteine + L-glutamate + ATP = gamma-L-glutamyl-L-cysteine + ADP + phosphate + H(+). The catalysed reaction is gamma-L-glutamyl-L-cysteine + glycine + ATP = glutathione + ADP + phosphate + H(+). It functions in the pathway sulfur metabolism; glutathione biosynthesis; glutathione from L-cysteine and L-glutamate: step 1/2. Its pathway is sulfur metabolism; glutathione biosynthesis; glutathione from L-cysteine and L-glutamate: step 2/2. Functionally, synthesizes glutathione from L-glutamate and L-cysteine via gamma-L-glutamyl-L-cysteine. The protein is Glutathione biosynthesis bifunctional protein GshAB of Clostridium perfringens (strain 13 / Type A).